The following is a 276-amino-acid chain: Probable ABC transporter permease protein NosY (276 aa).

Transmembrane regions (helical) follow at residues 20–40, 55–75, 111–131, 146–166, 179–199, and 251–271; these read WLLA…WLGA, IASL…LLAY, ILAL…ALLV, FMIS…VLSG, LGVW…LLVL, and VLWL…YAIF.

As to quaternary structure, the complex may be composed of an ATP-binding protein (NosF), a transmembrane protein (NosY) and a solute-binding protein (NosD).

The protein resides in the cell inner membrane. Required for the assembly of the copper chromophores of nitrous oxide reductase. Could be part of the ABC transporter complex NosDFY. This chain is Probable ABC transporter permease protein NosY, found in Stutzerimonas stutzeri (Pseudomonas stutzeri).